The primary structure comprises 441 residues: uncharacterized protein (441 aa).

This is an uncharacterized protein from Ictalurid herpesvirus 1 (strain Auburn) (IcHV-1).